A 503-amino-acid chain; its full sequence is Trehalose-6-phosphate synthase (503 aa).

Residues M1–A14 are compositionally biased toward polar residues. A disordered region spans residues M1 to S20. Residue R31 coordinates D-glucose 6-phosphate. G51 to G52 contacts UDP-alpha-D-glucose. D-glucose 6-phosphate contacts are provided by Y109 and D163. Positions 305 and 310 each coordinate UDP-alpha-D-glucose. R343 is a D-glucose 6-phosphate binding site. L408–E412 contributes to the UDP-alpha-D-glucose binding site.

This sequence belongs to the glycosyltransferase 20 family. In terms of assembly, homotetramer.

It catalyses the reaction ADP-alpha-D-glucose + D-glucose 6-phosphate = alpha,alpha-trehalose 6-phosphate + ADP + H(+). It carries out the reaction CDP-alpha-D-glucose + D-glucose 6-phosphate = alpha,alpha-trehalose 6-phosphate + CDP + H(+). The catalysed reaction is GDP-alpha-D-glucose + D-glucose 6-phosphate = alpha,alpha-trehalose 6-phosphate + GDP + H(+). The enzyme catalyses TDP-alpha-D-glucose + D-glucose 6-phosphate = 5-methyl-UDP + alpha,alpha-trehalose 6-phosphate + H(+). It catalyses the reaction D-glucose 6-phosphate + UDP-alpha-D-glucose = alpha,alpha-trehalose 6-phosphate + UDP + H(+). Its pathway is glycan biosynthesis; trehalose biosynthesis. Its function is as follows. Probably involved in the osmoprotection via the biosynthesis of trehalose and in the production of glycogen and alpha-glucan via the TreS-Pep2 branch involved in the biosynthesis of maltose-1-phosphate (M1P). Catalyzes the transfer of glucose from UDP-glucose (UDP-Glc) to D-glucose 6-phosphate (Glc-6-P) to form trehalose-6-phosphate. Probably also able to use ADP-Glc, CDP-Glc, GDP-Glc and TDP-Glc as glucosyl donors. This chain is Trehalose-6-phosphate synthase, found in Mycolicibacterium gilvum (strain PYR-GCK) (Mycobacterium gilvum (strain PYR-GCK)).